The sequence spans 125 residues: Large ribosomal subunit protein eL32 (125 aa).

The protein belongs to the eukaryotic ribosomal protein eL32 family.

The protein is Large ribosomal subunit protein eL32 (rpl32e) of Sulfolobus acidocaldarius (strain ATCC 33909 / DSM 639 / JCM 8929 / NBRC 15157 / NCIMB 11770).